Here is a 225-residue protein sequence, read N- to C-terminus: Thymidylate kinase (225 aa).

Residue 10 to 17 (GPEGAGKT) coordinates ATP.

It belongs to the thymidylate kinase family.

The enzyme catalyses dTMP + ATP = dTDP + ADP. Its function is as follows. Phosphorylation of dTMP to form dTDP in both de novo and salvage pathways of dTTP synthesis. The polypeptide is Thymidylate kinase (Geobacillus thermodenitrificans (strain NG80-2)).